Consider the following 535-residue polypeptide: Phosphoenolpyruvate carboxykinase (ATP) (535 aa).

Substrate-binding residues include Arg-59, Tyr-201, and Lys-207. ATP-binding positions include Lys-207, His-226, and 243 to 251 (GLSGTGKTT). Mn(2+)-binding residues include Lys-207 and His-226. Position 264 (Asp-264) interacts with Mn(2+). Residues Glu-292, Arg-328, 444 to 445 (RI), and Thr-450 contribute to the ATP site. Arg-328 contributes to the substrate binding site.

Belongs to the phosphoenolpyruvate carboxykinase (ATP) family. It depends on Mn(2+) as a cofactor.

The protein localises to the cytoplasm. It carries out the reaction oxaloacetate + ATP = phosphoenolpyruvate + ADP + CO2. Its pathway is carbohydrate biosynthesis; gluconeogenesis. Functionally, involved in the gluconeogenesis. Catalyzes the conversion of oxaloacetate (OAA) to phosphoenolpyruvate (PEP) through direct phosphoryl transfer between the nucleoside triphosphate and OAA. This is Phosphoenolpyruvate carboxykinase (ATP) from Bacteroides fragilis (strain ATCC 25285 / DSM 2151 / CCUG 4856 / JCM 11019 / LMG 10263 / NCTC 9343 / Onslow / VPI 2553 / EN-2).